The sequence spans 242 residues: Anamorsin homolog (242 aa).

An N-terminal SAM-like domain region spans residues 1–140 (MMNFADTLVI…NVTAENPDFL (140 aa)). The segment at 141-162 (SNEDDDEGNSSDGEAYQNAEDN) is linker. 4 residues coordinate [4Fe-4S] cluster: Cys-205, Cys-208, Cys-216, and Cys-219. 2 consecutive short sequence motifs (cx2C motif) follow at residues 205 to 208 (CGNC) and 216 to 219 (CASC). The tract at residues 205 to 219 (CGNCYLGDAFRCASC) is fe-S binding site B.

It belongs to the anamorsin family. In terms of assembly, monomer. [4Fe-4S] cluster is required as a cofactor.

The protein localises to the cytoplasm. The protein resides in the mitochondrion intermembrane space. Component of the cytosolic iron-sulfur (Fe-S) protein assembly (CIA) machinery. Required for the maturation of extramitochondrial Fe-S proteins. Part of an electron transfer chain functioning in an early step of cytosolic Fe-S biogenesis, facilitating the de novo assembly of a [4Fe-4S] cluster on the cytosolic Fe-S scaffold complex. Electrons are transferred from NADPH via a FAD- and FMN-containing diflavin oxidoreductase. Together with the diflavin oxidoreductase, also required for the assembly of the diferric tyrosyl radical cofactor of ribonucleotide reductase (RNR), probably by providing electrons for reduction during radical cofactor maturation in the catalytic small subunit. The sequence is that of Anamorsin homolog from Plasmodium knowlesi (strain H).